Consider the following 161-residue polypeptide: 2-C-methyl-D-erythritol 2,4-cyclodiphosphate synthase (161 aa).

A divalent metal cation is bound by residues aspartate 13 and histidine 15. Residues 13–15 and 40–41 contribute to the 4-CDP-2-C-methyl-D-erythritol 2-phosphate site; these read DAH and HS. Residue histidine 48 participates in a divalent metal cation binding. A 4-CDP-2-C-methyl-D-erythritol 2-phosphate-binding site is contributed by 62-64; it reads DIG.

This sequence belongs to the IspF family. As to quaternary structure, homotrimer. A divalent metal cation is required as a cofactor.

The enzyme catalyses 4-CDP-2-C-methyl-D-erythritol 2-phosphate = 2-C-methyl-D-erythritol 2,4-cyclic diphosphate + CMP. It participates in isoprenoid biosynthesis; isopentenyl diphosphate biosynthesis via DXP pathway; isopentenyl diphosphate from 1-deoxy-D-xylulose 5-phosphate: step 4/6. Functionally, involved in the biosynthesis of isopentenyl diphosphate (IPP) and dimethylallyl diphosphate (DMAPP), two major building blocks of isoprenoid compounds. Catalyzes the conversion of 4-diphosphocytidyl-2-C-methyl-D-erythritol 2-phosphate (CDP-ME2P) to 2-C-methyl-D-erythritol 2,4-cyclodiphosphate (ME-CPP) with a corresponding release of cytidine 5-monophosphate (CMP). The protein is 2-C-methyl-D-erythritol 2,4-cyclodiphosphate synthase of Deinococcus radiodurans (strain ATCC 13939 / DSM 20539 / JCM 16871 / CCUG 27074 / LMG 4051 / NBRC 15346 / NCIMB 9279 / VKM B-1422 / R1).